The sequence spans 297 residues: ATP synthase gamma chain (297 aa).

This sequence belongs to the ATPase gamma chain family. F-type ATPases have 2 components, CF(1) - the catalytic core - and CF(0) - the membrane proton channel. CF(1) has five subunits: alpha(3), beta(3), gamma(1), delta(1), epsilon(1). CF(0) has three main subunits: a, b and c.

The protein localises to the cell membrane. Its function is as follows. Produces ATP from ADP in the presence of a proton gradient across the membrane. The gamma chain is believed to be important in regulating ATPase activity and the flow of protons through the CF(0) complex. This is ATP synthase gamma chain from Renibacterium salmoninarum (strain ATCC 33209 / DSM 20767 / JCM 11484 / NBRC 15589 / NCIMB 2235).